A 64-amino-acid chain; its full sequence is MNTFVVVFLLLTAILCHAEHALDETARGCNRLNKKCNSDGDCCRYGERCISTGVNYYCRPDFGP.

An N-terminal signal peptide occupies residues 1-18; it reads MNTFVVVFLLLTAILCHA. Positions 19–27 are excised as a propeptide; the sequence is EHALDETAR. 3 disulfides stabilise this stretch: Cys-29-Cys-43, Cys-36-Cys-49, and Cys-42-Cys-58.

Belongs to the scorpion calcin-like family. As to expression, expressed by the venom gland.

The protein resides in the secreted. Functionally, may increase intracellular calcium release through the activation of nuclear inositol 1,4,5-trisphosphate receptors (ITPR) of cardiomyocytes, thereby causing an increase in the contraction frequency of these cells. The protein is Toxin BmCa-1 of Olivierus martensii (Manchurian scorpion).